The primary structure comprises 352 residues: GTPase Obg (352 aa).

One can recognise an Obg domain in the interval 1-159 (MHFLDQAKIF…MYVWLRLKLL (159 aa)). Residues 122–142 (DGGRGNASYKTSTNRAPRQHG) form a disordered region. An OBG-type G domain is found at 160–328 (ADAGLVGLPN…LLDAVLEYLP (169 aa)). GTP-binding positions include 166 to 173 (GLPNAGKS), 191 to 195 (FTTLR), 212 to 215 (DIPG), 280 to 283 (NKID), and 309 to 311 (SGA). Mg(2+)-binding residues include serine 173 and threonine 193.

This sequence belongs to the TRAFAC class OBG-HflX-like GTPase superfamily. OBG GTPase family. As to quaternary structure, monomer. Requires Mg(2+) as cofactor.

It is found in the cytoplasm. Its function is as follows. An essential GTPase which binds GTP, GDP and possibly (p)ppGpp with moderate affinity, with high nucleotide exchange rates and a fairly low GTP hydrolysis rate. Plays a role in control of the cell cycle, stress response, ribosome biogenesis and in those bacteria that undergo differentiation, in morphogenesis control. The chain is GTPase Obg from Novosphingobium aromaticivorans (strain ATCC 700278 / DSM 12444 / CCUG 56034 / CIP 105152 / NBRC 16084 / F199).